Here is a 367-residue protein sequence, read N- to C-terminus: Heme A synthase 2 (367 aa).

5 helical membrane-spanning segments follow: residues 28 to 48, 114 to 134, 143 to 163, 180 to 200, and 221 to 241; these read MVAI…GIGA, MWGR…LWTG, WLVT…WMVA, VHYC…LTVL, and MAMG…FLSG. Residue histidine 284 coordinates heme. 3 helical membrane-spanning segments follow: residues 286-306, 314-334, and 340-360; these read LLGT…IRAD, AFLV…TTLV, and IGIV…WAWF. Residue histidine 344 coordinates heme.

It belongs to the COX15/CtaA family. Type 2 subfamily. In terms of assembly, interacts with CtaB. Heme b serves as cofactor.

Its subcellular location is the cell membrane. The catalysed reaction is Fe(II)-heme o + 2 A + H2O = Fe(II)-heme a + 2 AH2. Its pathway is porphyrin-containing compound metabolism; heme A biosynthesis; heme A from heme O: step 1/1. Its function is as follows. Catalyzes the conversion of heme O to heme A by two successive hydroxylations of the methyl group at C8. The first hydroxylation forms heme I, the second hydroxylation results in an unstable dihydroxymethyl group, which spontaneously dehydrates, resulting in the formyl group of heme A. The chain is Heme A synthase 2 from Acidiphilium cryptum (strain JF-5).